We begin with the raw amino-acid sequence, 344 residues long: Protein Tob2 (344 aa).

Disordered regions lie at residues Gly144–Arg169 and Met191–Asn225. The span at Ser145–Pro164 shows a compositional bias: low complexity. Over residues Gly194–Gly210 the composition is skewed to gly residues. Low complexity predominate over residues Gln211–Asn225. Residue Ser254 is modified to Phosphoserine.

Belongs to the BTG family. Associates with CAF1. As to expression, ubiquitous.

The protein resides in the cytoplasm. Its function is as follows. Anti-proliferative protein inhibits cell cycle progression from the G0/G1 to S phases. The chain is Protein Tob2 (TOB2) from Homo sapiens (Human).